Consider the following 552-residue polypeptide: Arginine--tRNA ligase (552 aa).

Residues 129–139 (ANPTGPVTLAS) carry the 'HIGH' region motif.

This sequence belongs to the class-I aminoacyl-tRNA synthetase family. Monomer.

It is found in the cytoplasm. It carries out the reaction tRNA(Arg) + L-arginine + ATP = L-arginyl-tRNA(Arg) + AMP + diphosphate. This Frankia alni (strain DSM 45986 / CECT 9034 / ACN14a) protein is Arginine--tRNA ligase.